The primary structure comprises 64 residues: Conotoxin Cal6.26 (64 aa).

The first 22 residues, 1–22 (MKLTCVMIVAVLVLTVCKVVTS), serve as a signal peptide directing secretion. 3 cysteine pairs are disulfide-bonded: cysteine 32-cysteine 50, cysteine 40-cysteine 54, and cysteine 49-cysteine 60.

Expressed by the venom duct.

It is found in the secreted. Its function is as follows. Probable neurotoxin. The polypeptide is Conotoxin Cal6.26 (Californiconus californicus (California cone)).